Reading from the N-terminus, the 90-residue chain is UPF0297 protein ABC1593 (90 aa).

The protein belongs to the UPF0297 family.

The chain is UPF0297 protein ABC1593 from Shouchella clausii (strain KSM-K16) (Alkalihalobacillus clausii).